Reading from the N-terminus, the 178-residue chain is Probable chorismate pyruvate-lyase (178 aa).

M37, R78, L114, and E165 together coordinate substrate.

The protein belongs to the UbiC family.

It localises to the cytoplasm. The catalysed reaction is chorismate = 4-hydroxybenzoate + pyruvate. The protein operates within cofactor biosynthesis; ubiquinone biosynthesis. Functionally, removes the pyruvyl group from chorismate, with concomitant aromatization of the ring, to provide 4-hydroxybenzoate (4HB) for the ubiquinone pathway. In Aeromonas hydrophila subsp. hydrophila (strain ATCC 7966 / DSM 30187 / BCRC 13018 / CCUG 14551 / JCM 1027 / KCTC 2358 / NCIMB 9240 / NCTC 8049), this protein is Probable chorismate pyruvate-lyase.